The chain runs to 177 residues: Decaprenylphosphoryl-5-phosphoribose phosphatase (177 aa).

The next 4 helical transmembrane spans lie at 35–55 (HFGEHCIGWLILALLGAIALP), 62–82 (LVAGAGAFVAHAIAVLIKRLV), 124–144 (GLPLPVVLVPPMALSRILLGV), and 150–170 (VAVGVALGATVGAIVDSVGGG).

Belongs to the PA-phosphatase related phosphoesterase family.

The protein resides in the cell membrane. It catalyses the reaction trans,octa-cis-decaprenylphospho-beta-D-ribofuranose 5-phosphate + H2O = trans,octa-cis-decaprenylphospho-beta-D-ribofuranose + phosphate. It functions in the pathway cell wall biogenesis; cell wall polysaccharide biosynthesis. Functionally, phosphatase involved in the biosynthesis of decaprenylphosphoryl arabinose (DPA), which serves as the arabinose donor for the biosynthesis of arabinogalactan, the major mycobacterial cell wall polysaccharide. Catalyzes the dephosphorylation of decaprenylphosphoryl-5-phosphoribose (DPPR) to decaprenyl-phosphoribose (DPR). The polypeptide is Decaprenylphosphoryl-5-phosphoribose phosphatase (Mycobacterium tuberculosis (strain CDC 1551 / Oshkosh)).